The primary structure comprises 1890 residues: Proteasome-associated protein ECM29 homolog (1890 aa).

HEAT repeat units follow at residues 6 to 29 (NAEI…EKLE), 30 to 67 (AAVG…RLSS), 130 to 167 (DKLF…ICAN), 226 to 263 (FSDL…MLDF), 294 to 330 (RVRQ…TNTN), 334 to 354 (KVLA…ELVS), 355 to 395 (KVSK…SFPQ), 459 to 496 (GQQH…EYYA), 498 to 523 (ARYL…LYGT), 524 to 561 (SKKD…EQRR), 565 to 602 (PSFQ…SLEV), 685 to 722 (AKQL…FGLS), 776 to 813 (PQFV…AVEI), 843 to 882 (STKL…GDGE), 938 to 975 (DDFD…HCSQ), 980 to 1018 (LAKK…ISDS), 1118 to 1155 (PYLG…DSKE), and 1159 to 1196 (RYYW…RPNG). Residue S1213 is modified to Phosphoserine. HEAT repeat units follow at residues 1271 to 1309 (AVAS…SSGS), 1313 to 1350 (PHLA…AQEA), 1378 to 1415 (SVLE…IRLG), 1416 to 1457 (KEMT…LAKE), 1497 to 1534 (DYMD…DVSP), 1541 to 1578 (LNLN…RLSS), 1583 to 1620 (PDRL…GLDR), and 1623 to 1660 (QICS…QLEA). The disordered stretch occupies residues 1680–1702 (RKESDDEDEPNTSQELSADERNK). Residue S1683 is modified to Phosphoserine. T1691 carries the phosphothreonine modification. Phosphoserine is present on S1692. HEAT repeat units follow at residues 1751 to 1788 (PVQV…EKKI) and 1826 to 1863 (KEAL…NLEK).

Associated with the proteasome.

It localises to the cytoplasm. This chain is Proteasome-associated protein ECM29 homolog, found in Drosophila melanogaster (Fruit fly).